Consider the following 223-residue polypeptide: Probable transaldolase (223 aa).

The active-site Schiff-base intermediate with substrate is the Lys86.

The protein belongs to the transaldolase family. Type 3B subfamily.

The protein localises to the cytoplasm. The enzyme catalyses D-sedoheptulose 7-phosphate + D-glyceraldehyde 3-phosphate = D-erythrose 4-phosphate + beta-D-fructose 6-phosphate. It participates in carbohydrate degradation; pentose phosphate pathway; D-glyceraldehyde 3-phosphate and beta-D-fructose 6-phosphate from D-ribose 5-phosphate and D-xylulose 5-phosphate (non-oxidative stage): step 2/3. Its function is as follows. Transaldolase is important for the balance of metabolites in the pentose-phosphate pathway. This is Probable transaldolase (tal) from Thermoplasma acidophilum (strain ATCC 25905 / DSM 1728 / JCM 9062 / NBRC 15155 / AMRC-C165).